Reading from the N-terminus, the 236-residue chain is Alpha-acetolactate decarboxylase (236 aa).

The protein belongs to the alpha-acetolactate decarboxylase family.

It carries out the reaction (2S)-2-acetolactate + H(+) = (R)-acetoin + CO2. It participates in polyol metabolism; (R,R)-butane-2,3-diol biosynthesis; (R,R)-butane-2,3-diol from pyruvate: step 2/3. Converts acetolactate into acetoin. This chain is Alpha-acetolactate decarboxylase (aldB), found in Lactococcus lactis subsp. cremoris (strain MG1363).